Reading from the N-terminus, the 103-residue chain is Histone H4 (103 aa).

Residues 1–14 are compositionally biased toward gly residues; the sequence is MTGRGKGGKGLGKG. Residues 1 to 20 form a disordered region; sequence MTGRGKGGKGLGKGGAKRHR. Residues Lys-6 and Lys-13 each carry the N6-acetyl-N6-methyllysine; alternate modification. A DNA-binding region spans residues 17-21; it reads KRHRK.

The protein belongs to the histone H4 family. The nucleosome is a histone octamer containing two molecules each of H2A, H2B, H3 and H4 assembled in one H3-H4 heterotetramer and two H2A-H2B heterodimers. The octamer wraps approximately 147 bp of DNA.

Its subcellular location is the nucleus. The protein resides in the chromosome. Core component of nucleosome. Nucleosomes wrap and compact DNA into chromatin, limiting DNA accessibility to the cellular machineries which require DNA as a template. Histones thereby play a central role in transcription regulation, DNA repair, DNA replication and chromosomal stability. DNA accessibility is regulated via a complex set of post-translational modifications of histones, also called histone code, and nucleosome remodeling. This Trichogramma cacaeciae (Moth egg parasite) protein is Histone H4.